Reading from the N-terminus, the 89-residue chain is Teretoxin Tan6.8 (89 aa).

A signal peptide spans M1–E21. The segment at E22 to H42 is disordered. A propeptide spanning residues E22 to R44 is cleaved from the precursor.

Post-translationally, contains 3 disulfide bonds. In terms of tissue distribution, expressed by the venom duct.

The protein resides in the secreted. In Terebra anilis (Auger snail), this protein is Teretoxin Tan6.8.